A 329-amino-acid chain; its full sequence is 4-methyl-2-oxopentanoate reductase A (329 aa).

Residues 162–163 (GI), 240–242 (TAR), and aspartate 266 each bind NAD(+). Arginine 242 is a catalytic residue. Residue glutamate 271 is part of the active site. Histidine 289 (proton donor) is an active-site residue.

It belongs to the D-isomer specific 2-hydroxyacid dehydrogenase family.

It carries out the reaction (2R)-hydroxy-4-methylpentanoate + NADP(+) = 4-methyl-2-oxopentanoate + NADPH + H(+). It catalyses the reaction a (2R)-2-hydroxycarboxylate + NADP(+) = a 2-oxocarboxylate + NADPH + H(+). 4-methyl-2-oxopentanoate (MOA) reductase that reduces MOA, a possible intermediate in leucine synthesis, to D-leucate in a NADPH- or NADH-dependent manner, but with a preference for NADPH. In addition to MOA, shows broad substrate specificity toward 2-keto acids. The protein is 4-methyl-2-oxopentanoate reductase A of Aspergillus oryzae (strain ATCC 42149 / RIB 40) (Yellow koji mold).